Here is a 367-residue protein sequence, read N- to C-terminus: MEVEYMNFNELNLSDNILNAIRNKGFEKPTDIQMKVIPLFLNDEYNIVAQARTGSGKTASFAIPLIELVNENNGIEAIILTPTRELAIQVADEIESLKGNKNLKIAKIYGGKAIYPQIKALKNANIVVGTPGRILDHINRGTLNLKNVKYFILDEADEMLNMGFIKDVEKILNACNKDKRILLFSATMPREILNLAKKYMGDYSFIKAKINANIEQSYVEVNENERFEALCRLLKNKEFYGLVFCKTKRDTKELASMLRDIGFKAGAIHGDLSQSQREKVIRLFKQKKIRILIATDVMSRGIDVNDLNCVINYHLPQNPESYMHRIGRTGRAGKKGKAISIINRREYKKLRYIERAMKLKIKKLKFG.

Residues 6 to 34 carry the Q motif motif; it reads MNFNELNLSDNILNAIRNKGFEKPTDIQM. The 169-residue stretch at 38-206 folds into the Helicase ATP-binding domain; it reads PLFLNDEYNI…KKYMGDYSFI (169 aa). Residue 51–58 participates in ATP binding; it reads ARTGSGKT. A DEAD box motif is present at residues 154–157; it reads DEAD. Residues 213–367 form the Helicase C-terminal domain; that stretch reads NIEQSYVEVN…KLKIKKLKFG (155 aa).

It belongs to the DEAD box helicase family. In terms of assembly, homodimer.

The enzyme catalyses ATP + H2O = ADP + phosphate + H(+). The chain is Probable ATP-dependent RNA helicase MJ0669 from Methanocaldococcus jannaschii (strain ATCC 43067 / DSM 2661 / JAL-1 / JCM 10045 / NBRC 100440) (Methanococcus jannaschii).